Reading from the N-terminus, the 455-residue chain is Probable glycine dehydrogenase (decarboxylating) subunit 1 (455 aa).

Belongs to the GcvP family. N-terminal subunit subfamily. The glycine cleavage system is composed of four proteins: P, T, L and H. In this organism, the P 'protein' is a heterodimer of two subunits.

The catalysed reaction is N(6)-[(R)-lipoyl]-L-lysyl-[glycine-cleavage complex H protein] + glycine + H(+) = N(6)-[(R)-S(8)-aminomethyldihydrolipoyl]-L-lysyl-[glycine-cleavage complex H protein] + CO2. The glycine cleavage system catalyzes the degradation of glycine. The P protein binds the alpha-amino group of glycine through its pyridoxal phosphate cofactor; CO(2) is released and the remaining methylamine moiety is then transferred to the lipoamide cofactor of the H protein. The protein is Probable glycine dehydrogenase (decarboxylating) subunit 1 of Francisella tularensis subsp. tularensis (strain FSC 198).